The chain runs to 1143 residues: MAATSPHLTSIPQAVRVAASIDPSIDPGLKQQAIDYLTKVKQLSEETWQDCLQLYLQGAGAPGPSTTGRDGKEKLETDMRMFCLQVVDTVLIQKPEVMGADAVQGMYEAIVEFIQVEYIGGSCEGGQGFLRNKLAFTISQLFLRAFPSHIPTFLHPFFALLSPPTSSPPNLHPQLLTIRLLLEIAQEIHDTTLKTARIMTKERQERDGVVRDVIRSSGDDKTAVQGMLGIIEKGLEQMNSGNSSDKWAEAVDATLKTLSAWIPWIDLGVALNPTTLPFYHRLLHQPILSFRTATAGIYRTLVAKGIQDPSSRLQVLRVLAPVAVIDPLETETRGGKSEEVATFRASLGVVLSAYGVALIGISDNTEVAEQLRNEAEEMMNPALPLLLRFLSDRQYEVPLSVSPFVSDLLRIYKRMYKPPNPSTKAGQAPSPPSTLPQLSPERRQFLASMLDILIRQLAWPEDTEWEAPGNEDELDEDIAAFKNFRGSCRSFIESIAQIDKSLHTEVVARIVIATLDAYASGGGAAAVPWQQAELAMHLVYTFGEVSKNSTRAAFYELPPEMATKAARNKLRAAQGSGRTTPSSSDNVDLGPSSNNDRLEYEQFPLSPLGQLLTRCMTSGISSYPHPSVTLQYFEIIVRYIEFWKAKPETLPGLFEALLDGQGIHNSDEGVRRRCFYLFSKLCKDCRNDTVEGMVSPILDSMRDMMVINAELPPTDTPDEDPLIKATTGKSYVADQLYLFEASGNLVYLTKADPAKQMALLEAVAGPLLSGLGSGVERARVDENDLQAVLQVHHHLMALGHFAKGFPIVPDKLVELLPYTGPFKQMAEALLQAIEILKRRRVVRDAARFAFSQFANAIGTPVAELVPRFVSAVVTEFEPSELVDFLLFLQLLMHRLQGSTFETMDMLLLPLLSRIFTVLQQPVTGTDEAQVHARLKDAYLAFFTSLMNENLDGIFITDRNKPEFENVLTTLFNLTQDYSDGASQRLAFGFFSRSVIAWGTSPEAAARPSVFAESAMASQSKMVSGGGTAQPNAHAVTQEQRAKQCLPGYENFIYQRLLPAAFEVPANSQFNIRGGQLIVHEAAVLVRNTVQARGQEAIDFMLSDLLRRLNCPSDIANQLIASLTTQQAKDFKKTFFDFIKAMRG.

Residues 566 to 593 are disordered; the sequence is ARNKLRAAQGSGRTTPSSSDNVDLGPSS. Residues 576–593 are compositionally biased toward polar residues; the sequence is SGRTTPSSSDNVDLGPSS.

The protein belongs to the exportin family.

It is found in the nucleus. Its subcellular location is the cytoplasm. TRNA nucleus export receptor which facilitates tRNA translocation across the nuclear pore complex. Involved in pre-tRNA splicing, probably by affecting the interaction of pre-tRNA with splicing endonuclease. This chain is Exportin-T (LOS1), found in Cryptococcus neoformans var. neoformans serotype D (strain JEC21 / ATCC MYA-565) (Filobasidiella neoformans).